A 343-amino-acid polypeptide reads, in one-letter code: Ferredoxin--NADP reductase (343 aa).

FAD contacts are provided by aspartate 36, glutamine 44, tyrosine 49, valine 89, phenylalanine 124, aspartate 289, and threonine 330.

The protein belongs to the ferredoxin--NADP reductase type 2 family. In terms of assembly, homodimer. Requires FAD as cofactor.

The catalysed reaction is 2 reduced [2Fe-2S]-[ferredoxin] + NADP(+) + H(+) = 2 oxidized [2Fe-2S]-[ferredoxin] + NADPH. The sequence is that of Ferredoxin--NADP reductase from Mesorhizobium japonicum (strain LMG 29417 / CECT 9101 / MAFF 303099) (Mesorhizobium loti (strain MAFF 303099)).